The chain runs to 260 residues: Thiazole synthase (260 aa).

Residue Lys96 is the Schiff-base intermediate with DXP of the active site. 1-deoxy-D-xylulose 5-phosphate-binding positions include Gly157, 183–184, and 205–206; these read AG and AS.

The protein belongs to the ThiG family. As to quaternary structure, homotetramer. Forms heterodimers with either ThiH or ThiS.

The protein localises to the cytoplasm. It carries out the reaction [ThiS sulfur-carrier protein]-C-terminal-Gly-aminoethanethioate + 2-iminoacetate + 1-deoxy-D-xylulose 5-phosphate = [ThiS sulfur-carrier protein]-C-terminal Gly-Gly + 2-[(2R,5Z)-2-carboxy-4-methylthiazol-5(2H)-ylidene]ethyl phosphate + 2 H2O + H(+). Its pathway is cofactor biosynthesis; thiamine diphosphate biosynthesis. Catalyzes the rearrangement of 1-deoxy-D-xylulose 5-phosphate (DXP) to produce the thiazole phosphate moiety of thiamine. Sulfur is provided by the thiocarboxylate moiety of the carrier protein ThiS. In vitro, sulfur can be provided by H(2)S. The protein is Thiazole synthase of Corynebacterium glutamicum (strain R).